A 296-amino-acid polypeptide reads, in one-letter code: Phosphoribosylaminoimidazole-succinocarboxamide synthase (296 aa).

It belongs to the SAICAR synthetase family.

It carries out the reaction 5-amino-1-(5-phospho-D-ribosyl)imidazole-4-carboxylate + L-aspartate + ATP = (2S)-2-[5-amino-1-(5-phospho-beta-D-ribosyl)imidazole-4-carboxamido]succinate + ADP + phosphate + 2 H(+). Its pathway is purine metabolism; IMP biosynthesis via de novo pathway; 5-amino-1-(5-phospho-D-ribosyl)imidazole-4-carboxamide from 5-amino-1-(5-phospho-D-ribosyl)imidazole-4-carboxylate: step 1/2. The polypeptide is Phosphoribosylaminoimidazole-succinocarboxamide synthase (Thioalkalivibrio sulfidiphilus (strain HL-EbGR7)).